Reading from the N-terminus, the 321-residue chain is MRHRWEDRPVAPPPDGRPTEYLPFRQERGRHGRPGWLKARVPDGPGYREIKETMRGLSLHTVCEEARCPNIGECWNNRTATFMILGNVCTRSCGFCAVLTGRPQELDLEEPYRVADAVKKMGLRHAVITSVNRDELPDGGASVFAATIRAIRREVPGCAVEVLTPDFKGDRDAIKTVIDARPDTFNHNIETVPRLYPAVRPQAKYGRSLEVLRYAKELDPGVLTKSGFMVGLGEVEEEIVRTMRDLREHGVDILTIGQYLRPTENHLPMARYYTPQEFARYKKLGLEMGFSHVESGPLVRSSYHAHEQTEDARRGALGARG.

The interval 1-21 is disordered; the sequence is MRHRWEDRPVAPPPDGRPTEY. The [4Fe-4S] cluster site is built by cysteine 63, cysteine 68, cysteine 74, cysteine 89, cysteine 93, cysteine 96, and serine 302. Positions 75–291 constitute a Radical SAM core domain; it reads WNNRTATFMI…KKLGLEMGFS (217 aa). The tract at residues 301 to 321 is disordered; sequence SSYHAHEQTEDARRGALGARG. Basic and acidic residues predominate over residues 304 to 314; that stretch reads HAHEQTEDARR.

Belongs to the radical SAM superfamily. Lipoyl synthase family. [4Fe-4S] cluster is required as a cofactor.

Its subcellular location is the cytoplasm. The catalysed reaction is [[Fe-S] cluster scaffold protein carrying a second [4Fe-4S](2+) cluster] + N(6)-octanoyl-L-lysyl-[protein] + 2 oxidized [2Fe-2S]-[ferredoxin] + 2 S-adenosyl-L-methionine + 4 H(+) = [[Fe-S] cluster scaffold protein] + N(6)-[(R)-dihydrolipoyl]-L-lysyl-[protein] + 4 Fe(3+) + 2 hydrogen sulfide + 2 5'-deoxyadenosine + 2 L-methionine + 2 reduced [2Fe-2S]-[ferredoxin]. The protein operates within protein modification; protein lipoylation via endogenous pathway; protein N(6)-(lipoyl)lysine from octanoyl-[acyl-carrier-protein]: step 2/2. Functionally, catalyzes the radical-mediated insertion of two sulfur atoms into the C-6 and C-8 positions of the octanoyl moiety bound to the lipoyl domains of lipoate-dependent enzymes, thereby converting the octanoylated domains into lipoylated derivatives. This Rubrobacter xylanophilus (strain DSM 9941 / JCM 11954 / NBRC 16129 / PRD-1) protein is Lipoyl synthase.